The sequence spans 299 residues: Pyridoxal 5'-phosphate synthase subunit PdxS (299 aa).

Asp-24 provides a ligand contact to D-ribose 5-phosphate. Lys-81 (schiff-base intermediate with D-ribose 5-phosphate) is an active-site residue. Gly-153 contacts D-ribose 5-phosphate. Residue Arg-165 participates in D-glyceraldehyde 3-phosphate binding. Residues Gly-219 and 240–241 (GS) each bind D-ribose 5-phosphate.

This sequence belongs to the PdxS/SNZ family. In terms of assembly, in the presence of PdxT, forms a dodecamer of heterodimers.

It carries out the reaction aldehydo-D-ribose 5-phosphate + D-glyceraldehyde 3-phosphate + L-glutamine = pyridoxal 5'-phosphate + L-glutamate + phosphate + 3 H2O + H(+). It functions in the pathway cofactor biosynthesis; pyridoxal 5'-phosphate biosynthesis. Catalyzes the formation of pyridoxal 5'-phosphate from ribose 5-phosphate (RBP), glyceraldehyde 3-phosphate (G3P) and ammonia. The ammonia is provided by the PdxT subunit. Can also use ribulose 5-phosphate and dihydroxyacetone phosphate as substrates, resulting from enzyme-catalyzed isomerization of RBP and G3P, respectively. This chain is Pyridoxal 5'-phosphate synthase subunit PdxS, found in Methanococcus vannielii (strain ATCC 35089 / DSM 1224 / JCM 13029 / OCM 148 / SB).